The primary structure comprises 501 residues: Glycerol kinase (501 aa).

Residue T17 coordinates ADP. Residues T17, T18, and S19 each coordinate ATP. Residue T17 coordinates sn-glycerol 3-phosphate. Position 21 (R21) interacts with ADP. 4 residues coordinate sn-glycerol 3-phosphate: R87, E88, Y139, and D243. Residues R87, E88, Y139, D243, and Q244 each coordinate glycerol. ADP-binding residues include T265 and G308. Residues T265, G308, Q312, and G409 each contribute to the ATP site. Positions 409 and 413 each coordinate ADP.

The protein belongs to the FGGY kinase family.

The enzyme catalyses glycerol + ATP = sn-glycerol 3-phosphate + ADP + H(+). The protein operates within polyol metabolism; glycerol degradation via glycerol kinase pathway; sn-glycerol 3-phosphate from glycerol: step 1/1. Its activity is regulated as follows. Inhibited by fructose 1,6-bisphosphate (FBP). Functionally, key enzyme in the regulation of glycerol uptake and metabolism. Catalyzes the phosphorylation of glycerol to yield sn-glycerol 3-phosphate. In Pseudomonas syringae pv. syringae (strain B728a), this protein is Glycerol kinase.